A 59-amino-acid polypeptide reads, in one-letter code: Large ribosomal subunit protein bL32 (59 aa).

A compositionally biased stretch (basic residues) spans 1–20 (MAVPKKKTSKGKRNQRHATW). The interval 1–22 (MAVPKKKTSKGKRNQRHATWKG) is disordered.

Belongs to the bacterial ribosomal protein bL32 family.

The sequence is that of Large ribosomal subunit protein bL32 from Prochlorococcus marinus (strain NATL1A).